A 614-amino-acid chain; its full sequence is Phosphomethylpyrimidine synthase (614 aa).

Positions 1 to 16 are enriched in low complexity; it reads MNAQLSALQQQAQQLS. The disordered stretch occupies residues 1-36; the sequence is MNAQLSALQQQAQQLSESVTRPIPGSRKIHVPGSRP. Substrate is bound by residues asparagine 230, methionine 259, tyrosine 288, histidine 324, 344–346, 385–388, and glutamate 424; these read SRG and DGLR. Position 428 (histidine 428) interacts with Zn(2+). Tyrosine 451 contributes to the substrate binding site. Position 492 (histidine 492) interacts with Zn(2+). 3 residues coordinate [4Fe-4S] cluster: cysteine 572, cysteine 575, and cysteine 580.

It belongs to the ThiC family. In terms of assembly, homodimer. [4Fe-4S] cluster serves as cofactor.

It catalyses the reaction 5-amino-1-(5-phospho-beta-D-ribosyl)imidazole + S-adenosyl-L-methionine = 4-amino-2-methyl-5-(phosphooxymethyl)pyrimidine + CO + 5'-deoxyadenosine + formate + L-methionine + 3 H(+). It participates in cofactor biosynthesis; thiamine diphosphate biosynthesis. Its function is as follows. Catalyzes the synthesis of the hydroxymethylpyrimidine phosphate (HMP-P) moiety of thiamine from aminoimidazole ribotide (AIR) in a radical S-adenosyl-L-methionine (SAM)-dependent reaction. In Stenotrophomonas maltophilia (strain R551-3), this protein is Phosphomethylpyrimidine synthase.